The chain runs to 515 residues: Maturase K (515 aa).

It belongs to the intron maturase 2 family. MatK subfamily.

It is found in the plastid. It localises to the chloroplast. In terms of biological role, usually encoded in the trnK tRNA gene intron. Probably assists in splicing its own and other chloroplast group II introns. The sequence is that of Maturase K from Pinus leiophylla (Chihuahua pine).